A 205-amino-acid polypeptide reads, in one-letter code: Dephospho-CoA kinase (205 aa).

The 200-residue stretch at 6–205 folds into the DPCK domain; that stretch reads RIGLTGGIAA…EIYAGWCAGR (200 aa). ATP is bound at residue 14 to 19; sequence AAGKST.

Belongs to the CoaE family.

The protein resides in the cytoplasm. It catalyses the reaction 3'-dephospho-CoA + ATP = ADP + CoA + H(+). The protein operates within cofactor biosynthesis; coenzyme A biosynthesis; CoA from (R)-pantothenate: step 5/5. Catalyzes the phosphorylation of the 3'-hydroxyl group of dephosphocoenzyme A to form coenzyme A. This chain is Dephospho-CoA kinase, found in Bifidobacterium longum (strain NCC 2705).